A 432-amino-acid chain; its full sequence is Hexuronate transporter (432 aa).

A signal peptide spans 1 to 31 (MRKIKGLRWYMIALVTLGTVLGYLTRNTVAA). Residues 33 to 48 (APTLMEELNISTQQYS) lie on the Periplasmic side of the membrane. A helical membrane pass occupies residues 49–69 (YIIAAYSAAYTVMQPVAGYVL). Over 70 to 75 (DVLGTK) the chain is Cytoplasmic. The helical transmembrane segment at 76 to 96 (IGYAMFAVLWAVFCGATALAG) threads the bilayer. Residues 97 to 99 (SWG) lie on the Periplasmic side of the membrane. Residues 100 to 120 (GLAVARGAVGAAEAAMIPAGL) traverse the membrane as a helical segment. The Cytoplasmic segment spans residues 121–138 (KASSEWFPAKERSIAVGY). The helical transmembrane segment at 139 to 159 (FNVGSSIGAMIAPPLVVWAIV) threads the bilayer. The Periplasmic portion of the chain corresponds to 160–164 (MHSWQ). The helical transmembrane segment at 165-185 (MAFIISGALSFIWAMAWLIFY) threads the bilayer. Residues 186 to 236 (KHPRDQKHLTDEERDYIINGQEAQHQVSTAKKMSVGQILRNRQFWGIALPR) lie on the Cytoplasmic side of the membrane. Residues 237–257 (FLAEPAWGTFNAWIPLFMFKV) traverse the membrane as a helical segment. Topologically, residues 258-264 (YGFNLKE) are periplasmic. The helical transmembrane segment at 265–285 (IAMFAWMPMLFADLGCILGGY) threads the bilayer. Residues 286 to 293 (LPPLFQRW) are Cytoplasmic-facing. The chain crosses the membrane as a helical span at residues 294–314 (FGVNLIVSRKMVVTLGAVLMI). Residues 315–317 (GPG) are Periplasmic-facing. The helical transmembrane segment at 318–338 (MIGLFTNPYVAIMLLCIGGFA) threads the bilayer. The Cytoplasmic segment spans residues 339–369 (HQALSGALITLSSDVFGRNEVATANGLTGMS). A helical membrane pass occupies residues 370-390 (AWLASTLFALVVGALADTIGF). A topological domain (periplasmic) is located at residue S391. A helical membrane pass occupies residues 392-412 (PLFAVLAVFDLLGALVIWTVL). The Cytoplasmic portion of the chain corresponds to 413-432 (QNKPAIEVAQETHNDPAPQH).

The protein belongs to the major facilitator superfamily. Phthalate permease family.

The protein resides in the cell inner membrane. The enzyme catalyses aldehydo-D-glucuronate(in) + H(+)(in) = aldehydo-D-glucuronate(out) + H(+)(out). The catalysed reaction is aldehydo-D-galacturonate(out) + H(+)(out) = aldehydo-D-galacturonate(in) + H(+)(in). Its function is as follows. Transport of aldohexuronates such as D-glucuronate and D-galacturonate. The sequence is that of Hexuronate transporter (exuT) from Escherichia coli O157:H7.